The chain runs to 73 residues: IGMVVECKDGYLMGPDGCKRGCLTRPARYCPNECSRLKGKDGYCYLWLACYCYNMPESAPVWERATNRCGKGK.

A signal peptide spans 1–7 (IGMVVEC). Residues 8 to 70 (KDGYLMGPDG…VWERATNRCG (63 aa)) form the LCN-type CS-alpha/beta domain. Cystine bridges form between Cys-18–Cys-69, Cys-22–Cys-44, Cys-30–Cys-50, and Cys-34–Cys-52. Lys-71 bears the Lysine amide mark.

This sequence belongs to the long (4 C-C) scorpion toxin superfamily. Sodium channel inhibitor family. Beta subfamily. In terms of tissue distribution, expressed by the venom gland.

The protein resides in the secreted. Functionally, beta toxins bind voltage-independently at site-4 of sodium channels (Nav) and shift the voltage of activation toward more negative potentials thereby affecting sodium channel activation and promoting spontaneous and repetitive firing. The sequence is that of Toxin Td10 from Tityus discrepans (Venezuelan scorpion).